Here is a 381-residue protein sequence, read N- to C-terminus: cAMP-dependent protein kinase type I-beta regulatory subunit (381 aa).

A dimerization and phosphorylation region spans residues M1–V136. Residue S3 is modified to Phosphoserine. At Y21 the chain carries 3'-nitrotyrosine. Positions L66–N88 are disordered. 2 positions are modified to phosphoserine: S77 and S83. Residue T85 is modified to Phosphothreonine. The Pseudophosphorylation motif signature appears at R96–V100. R97 carries the omega-N-methylarginine modification. Residues L137 to S254, E202, R211, I255 to V381, E326, and R335 contribute to the 3',5'-cyclic AMP site.

It belongs to the cAMP-dependent kinase regulatory chain family. The inactive holoenzyme is composed of two regulatory chains and two catalytic chains. Activation by cAMP releases the two active catalytic monomers and the regulatory dimer. Interacts with PRKX; regulates this cAMP-dependent protein kinase. Interacts with smAKAP; this interaction may target PRKAR1B to the plasma membrane. In terms of processing, the pseudophosphorylation site binds to the substrate-binding region of the catalytic chain, resulting in the inhibition of its activity. Abundant in brain and testis. No expression in lung, heart, liver, spleen, kidney and skeletal muscle.

The protein resides in the cell membrane. Regulatory subunit of the cAMP-dependent protein kinases involved in cAMP signaling in cells. The sequence is that of cAMP-dependent protein kinase type I-beta regulatory subunit (Prkar1b) from Rattus norvegicus (Rat).